The primary structure comprises 803 residues: Carbon monoxide dehydrogenase large chain (803 aa).

Arginine 384 bears the 4-hydroxyarginine mark. Cysteine 385 contributes to the Cu(+) binding site. Glutamate 757 contributes to the Mo-molybdopterin cytosine dinucleotide binding site.

As to quaternary structure, dimer of heterotrimers. Each heterotrimer consists of a large, a medium and a small subunit. Requires Cu(+) as cofactor. Mo-molybdopterin cytosine dinucleotide is required as a cofactor.

It catalyses the reaction CO + a quinone + H2O = a quinol + CO2. Functionally, catalyzes the oxidation of carbon monoxide to carbon dioxide. This is Carbon monoxide dehydrogenase large chain (cutL) from Hydrogenophaga pseudoflava (Pseudomonas carboxydoflava).